Consider the following 306-residue polypeptide: tRNA pseudouridine synthase B (306 aa).

D43 serves as the catalytic Nucleophile.

The protein belongs to the pseudouridine synthase TruB family. Type 1 subfamily.

The catalysed reaction is uridine(55) in tRNA = pseudouridine(55) in tRNA. Functionally, responsible for synthesis of pseudouridine from uracil-55 in the psi GC loop of transfer RNAs. The chain is tRNA pseudouridine synthase B from Syntrophobacter fumaroxidans (strain DSM 10017 / MPOB).